A 324-amino-acid polypeptide reads, in one-letter code: Uroporphyrinogen decarboxylase (324 aa).

Residues 14–18 (RQAGR), F32, D63, Y136, S191, and H302 each bind substrate.

The protein belongs to the uroporphyrinogen decarboxylase family. As to quaternary structure, homodimer.

It is found in the cytoplasm. It catalyses the reaction uroporphyrinogen III + 4 H(+) = coproporphyrinogen III + 4 CO2. The protein operates within porphyrin-containing compound metabolism; protoporphyrin-IX biosynthesis; coproporphyrinogen-III from 5-aminolevulinate: step 4/4. In terms of biological role, catalyzes the decarboxylation of four acetate groups of uroporphyrinogen-III to yield coproporphyrinogen-III. The polypeptide is Uroporphyrinogen decarboxylase (Neorickettsia sennetsu (strain ATCC VR-367 / Miyayama) (Ehrlichia sennetsu)).